A 1486-amino-acid polypeptide reads, in one-letter code: Histone-lysine N-methyltransferase set1 (1486 aa).

Disordered stretches follow at residues 1 to 64, 83 to 148, 201 to 231, 309 to 360, 409 to 429, and 532 to 665; these read MENE…SPKD, FSSE…NNNN, TTDN…TTTT, GGMN…IFTQ, IDDI…QDHY, and DRER…NSDV. Over residues 9–52 the composition is skewed to low complexity; the sequence is NSLNNKSNVNNSNNDINNSKSNNNNTNTNYNNNHNNTTTTTTIN. Positions 53 to 64 are enriched in basic and acidic residues; the sequence is KTEEKQNDSPKD. The span at 115 to 148 shows a compositional bias: low complexity; the sequence is ITSPTTSPTTSTSTSTSTSTSTSTSTIINNNNNN. Residues 201 to 210 show a composition bias toward polar residues; it reads TTDNTTLMSP. The span at 211 to 231 shows a compositional bias: low complexity; the sequence is NNATTTNGSSSNISTTTTTTT. Pro residues predominate over residues 320–343; that stretch reads QPPPPSPPPPPPPTLPPPPPPTLP. Residues 347–359 are compositionally biased toward polar residues; the sequence is SLEQQSTKQQIFT. Residues 359-400 adopt a coiled-coil conformation; it reads TQQQQQQQQQQQQQQQQQQQQQQQQQQQQQQQQQIPKINQQH. A compositionally biased stretch (basic and acidic residues) spans 532–542; sequence DRERDRDRYDR. 2 stretches are compositionally biased toward low complexity: residues 552–584 and 617–663; these read STTT…TTST and NNSS…NNNS. The stretch at 717–744 forms a coiled coil; that stretch reads KLNVDNKKTNTINEELQKQKQLENDSNN. Composition is skewed to low complexity over residues 812–829 and 843–860; these read NTTN…NNTT and PTSR…TTTK. Disordered regions lie at residues 812-1103, 1130-1255, and 1278-1327; these read NTTN…IQSN, SEEG…DNIN, and KLFK…SSRF. Residues 906-931 show a composition bias toward acidic residues; sequence DSEDDGNNNNDDDDDDDDDEDDDFDQ. 2 stretches are compositionally biased toward basic residues: residues 945–954 and 965–979; these read NIKSIIKKKP and HHHN…HHHH. 2 stretches are compositionally biased toward acidic residues: residues 997–1006 and 1022–1043; these read LDSDNENQDE and SDDD…TEEN. The segment covering 1048-1064 has biased composition (basic residues); the sequence is KSNKRPRKSKFNGKSKK. Positions 1065–1077 are enriched in low complexity; sequence PTTTTSTTTTATK. Residues 1139 to 1148 are compositionally biased toward polar residues; that stretch reads QEILSTPTRT. The stretch at 1177–1255 forms a coiled coil; it reads QQKQEKQEKH…NLNTSIDNIN (79 aa). Over residues 1179–1199 the composition is skewed to basic and acidic residues; the sequence is KQEKQEKHEHKLKNKELKQKN. The span at 1213-1223 shows a compositional bias: low complexity; it reads ENLNGDNNNNN. Over residues 1224–1240 the composition is skewed to basic and acidic residues; sequence DKSENENENENENKNEN. Composition is skewed to low complexity over residues 1243 to 1255 and 1292 to 1316; these read DNNN…DNIN and GAAS…ETGG. Positions 1347 to 1464 constitute an SET domain; that stretch reads KRIKFERSDI…IGEEITYDYK (118 aa). Tyr-1463 is an S-adenosyl-L-methionine binding site. Positions 1470–1486 constitute a Post-SET domain; sequence VKIPCLCKSPKCRQTLN.

The protein belongs to the class V-like SAM-binding methyltransferase superfamily. As to quaternary structure, component of the Set1C/COMPASS complex.

It is found in the nucleus. The protein localises to the chromosome. The catalysed reaction is L-lysyl(4)-[histone H3] + 3 S-adenosyl-L-methionine = N(6),N(6),N(6)-trimethyl-L-lysyl(4)-[histone H3] + 3 S-adenosyl-L-homocysteine + 3 H(+). It carries out the reaction N(6)-methyl-L-lysyl(4)-[histone H3] + S-adenosyl-L-methionine = N(6),N(6)-dimethyl-L-lysyl(4)-[histone H3] + S-adenosyl-L-homocysteine + H(+). The enzyme catalyses N(6),N(6)-dimethyl-L-lysyl(4)-[histone H3] + S-adenosyl-L-methionine = N(6),N(6),N(6)-trimethyl-L-lysyl(4)-[histone H3] + S-adenosyl-L-homocysteine + H(+). Catalytic component of the COMPASS (Set1C) complex that specifically mono-, di- and trimethylates histone H3 to form H3K4me1/2/3. Binds RNAs which might negatively affect its histone methyltransferase activity. COMPASS recognizes ubiquitinated H2B on one face of the nucleosome which stimulates the methylation of H3 on the opposing face. May act to regulate chromatin-mediated events. The protein is Histone-lysine N-methyltransferase set1 (set1) of Dictyostelium discoideum (Social amoeba).